Here is a 719-residue protein sequence, read N- to C-terminus: Glutamate--tRNA ligase, cytoplasmic (719 aa).

Serine 93 is a binding site for ATP. Residues 176-205 (SGKPVAAPKSKDSQQAVKGDGQDKGKPEVD) are disordered. Residues 195-204 (DGQDKGKPEV) show a composition bias toward basic and acidic residues. 217–219 (RFA) contributes to the L-glutamate binding site. A 'HIGH' region motif is present at residues 220–230 (PEPSGYLHIGH). Histidine 227 is a binding site for ATP. L-glutamate contacts are provided by residues 393 to 397 (YDFAC) and arginine 411. ATP is bound by residues glutamate 414 and 448 to 452 (LLSKR). A 'KMSKS' region motif is present at residues 448–452 (LLSKR).

It belongs to the class-I aminoacyl-tRNA synthetase family. Glutamate--tRNA ligase type 2 subfamily. Interacts with GLN2, COL4 and RPP13L4/ZAR1.

The protein resides in the cytoplasm. The protein localises to the cytosol. It catalyses the reaction tRNA(Glu) + L-glutamate + ATP = L-glutamyl-tRNA(Glu) + AMP + diphosphate. Functionally, catalyzes the attachment of glutamate to tRNA(Glu) in a two-step reaction: glutamate is first activated by ATP to form Glu-AMP and then transferred to the acceptor end of tRNA(Glu). This is Glutamate--tRNA ligase, cytoplasmic from Arabidopsis thaliana (Mouse-ear cress).